The sequence spans 220 residues: Ribose-5-phosphate isomerase A (220 aa).

Residues 29-32, 82-85, and 95-98 each bind substrate; these read TGST, DGCD, and KGGG. Catalysis depends on Glu-104, which acts as the Proton acceptor. Lys-122 is a binding site for substrate.

This sequence belongs to the ribose 5-phosphate isomerase family. As to quaternary structure, homodimer.

The enzyme catalyses aldehydo-D-ribose 5-phosphate = D-ribulose 5-phosphate. It participates in carbohydrate degradation; pentose phosphate pathway; D-ribose 5-phosphate from D-ribulose 5-phosphate (non-oxidative stage): step 1/1. Functionally, catalyzes the reversible conversion of ribose-5-phosphate to ribulose 5-phosphate. In Laribacter hongkongensis (strain HLHK9), this protein is Ribose-5-phosphate isomerase A.